The chain runs to 130 residues: Small ribosomal subunit protein uS8 (130 aa).

Belongs to the universal ribosomal protein uS8 family.

This is Small ribosomal subunit protein uS8 (RPS15A) from Paracentrotus lividus (Common sea urchin).